Reading from the N-terminus, the 271-residue chain is Phosphate import ATP-binding protein PstB 1 (271 aa).

The 243-residue stretch at Met-24–Ile-266 folds into the ABC transporter domain. Gly-56–Ser-63 is a binding site for ATP.

This sequence belongs to the ABC transporter superfamily. Phosphate importer (TC 3.A.1.7) family. The complex is composed of two ATP-binding proteins (PstB), two transmembrane proteins (PstC and PstA) and a solute-binding protein (PstS).

The protein resides in the cell inner membrane. The enzyme catalyses phosphate(out) + ATP + H2O = ADP + 2 phosphate(in) + H(+). In terms of biological role, part of the ABC transporter complex PstSACB involved in phosphate import. Responsible for energy coupling to the transport system. This is Phosphate import ATP-binding protein PstB 1 from Rhizobium johnstonii (strain DSM 114642 / LMG 32736 / 3841) (Rhizobium leguminosarum bv. viciae).